We begin with the raw amino-acid sequence, 419 residues long: L-rhamnose isomerase (419 aa).

Residues His262, Asp294, and Asp296 each coordinate Mn(2+).

It belongs to the rhamnose isomerase family. As to quaternary structure, homotetramer. It depends on Mn(2+) as a cofactor.

It localises to the cytoplasm. The catalysed reaction is L-rhamnopyranose = L-rhamnulose. It functions in the pathway carbohydrate degradation; L-rhamnose degradation; glycerone phosphate from L-rhamnose: step 1/3. In terms of biological role, catalyzes the interconversion of L-rhamnose and L-rhamnulose. This chain is L-rhamnose isomerase, found in Klebsiella pneumoniae subsp. pneumoniae (strain ATCC 700721 / MGH 78578).